The following is a 380-amino-acid chain: Reducing-end xylose-releasing exo-oligoxylanase Rex8A (380 aa).

Glu70 acts as the Proton donor in catalysis. Asp265 functions as the Proton acceptor in the catalytic mechanism.

This sequence belongs to the glycosyl hydrolase 8 (cellulase D) family.

It carries out the reaction Hydrolysis of (1-&gt;4)-beta-D-xylose residues from the reducing end of oligosaccharides.. It functions in the pathway glycan degradation; xylan degradation. Involved in depolymerization of xylan, a major component of the lignocellulosic substrates. Acts as an exo-oligoxylanase that efficiently hydrolyzes xylooligosaccharides, releasing xylose from their reducing ends. Hydrolyzes xylooligomers of 3 to 6 xylose units to xylose and xylobiose. Besides linear xylooligosaccharides, also hydrolyzes branched xylooligomers, such as xylooligomers decorated with 4-O-methyl-D-glucuronic acid moieties. Its proposed role is the degradation of xylooligomers produced by the activity of extracellular xylanases once they have been transported inside cells. Shows minor activity on polymeric xylan (glucuronoxylan from beechwood). Is not active on cellooligosaccharides or cellulosic substrates, or on other polysaccharides such as pectin, polygalacturonic acid, laminarin, or lichenan. This Paenibacillus barcinonensis protein is Reducing-end xylose-releasing exo-oligoxylanase Rex8A.